Reading from the N-terminus, the 230-residue chain is Cytochrome c oxidase subunit 2 (230 aa).

Residues 1 to 26 (MATPAQLGLMDAASPVMEEMIYFHDH) lie on the Mitochondrial intermembrane side of the membrane. A helical transmembrane segment spans residues 27–48 (VMLVLILITCLIFYSMLVLISS). The Mitochondrial matrix portion of the chain corresponds to 49–62 (KYIYRFLTDGHVIE). The chain crosses the membrane as a helical span at residues 63–82 (TVWTVIPAIILVVVALPSLK). Residues 83–230 (LLYLTDELDN…GWCDMMLDEE (148 aa)) lie on the Mitochondrial intermembrane side of the membrane. Residues H161, C196, E198, C200, H204, and M207 each coordinate Cu cation. Residue E198 coordinates Mg(2+).

It belongs to the cytochrome c oxidase subunit 2 family. As to quaternary structure, component of the cytochrome c oxidase (complex IV, CIV), a multisubunit enzyme composed of a catalytic core of 3 subunits and several supernumerary subunits. The complex exists as a monomer or a dimer and forms supercomplexes (SCs) in the inner mitochondrial membrane with ubiquinol-cytochrome c oxidoreductase (cytochrome b-c1 complex, complex III, CIII). Cu cation serves as cofactor.

It localises to the mitochondrion inner membrane. It catalyses the reaction 4 Fe(II)-[cytochrome c] + O2 + 8 H(+)(in) = 4 Fe(III)-[cytochrome c] + 2 H2O + 4 H(+)(out). In terms of biological role, component of the cytochrome c oxidase, the last enzyme in the mitochondrial electron transport chain which drives oxidative phosphorylation. The respiratory chain contains 3 multisubunit complexes succinate dehydrogenase (complex II, CII), ubiquinol-cytochrome c oxidoreductase (cytochrome b-c1 complex, complex III, CIII) and cytochrome c oxidase (complex IV, CIV), that cooperate to transfer electrons derived from NADH and succinate to molecular oxygen, creating an electrochemical gradient over the inner membrane that drives transmembrane transport and the ATP synthase. Cytochrome c oxidase is the component of the respiratory chain that catalyzes the reduction of oxygen to water. Electrons originating from reduced cytochrome c in the intermembrane space (IMS) are transferred via the dinuclear copper A center (CU(A)) of subunit 2 and heme A of subunit 1 to the active site in subunit 1, a binuclear center (BNC) formed by heme A3 and copper B (CU(B)). The BNC reduces molecular oxygen to 2 water molecules using 4 electrons from cytochrome c in the IMS and 4 protons from the mitochondrial matrix. The protein is Cytochrome c oxidase subunit 2 (COII) of Branchiostoma floridae (Florida lancelet).